The chain runs to 396 residues: Ribosomal RNA large subunit methyltransferase I (396 aa).

Positions 2–81 (TVRLILAKGR…ESIDIDFFVR (80 aa)) constitute a PUA domain.

The protein belongs to the methyltransferase superfamily. RlmI family.

The protein resides in the cytoplasm. The enzyme catalyses cytidine(1962) in 23S rRNA + S-adenosyl-L-methionine = 5-methylcytidine(1962) in 23S rRNA + S-adenosyl-L-homocysteine + H(+). In terms of biological role, specifically methylates the cytosine at position 1962 (m5C1962) of 23S rRNA. The sequence is that of Ribosomal RNA large subunit methyltransferase I from Erwinia tasmaniensis (strain DSM 17950 / CFBP 7177 / CIP 109463 / NCPPB 4357 / Et1/99).